Here is a 201-residue protein sequence, read N- to C-terminus: Large ribosomal subunit protein uL4 (201 aa).

The tract at residues 44 to 66 (KAQKTRAEVRGGGKKPWRQKGTG) is disordered. Basic residues predominate over residues 55 to 66 (GGKKPWRQKGTG).

Belongs to the universal ribosomal protein uL4 family. In terms of assembly, part of the 50S ribosomal subunit.

Functionally, one of the primary rRNA binding proteins, this protein initially binds near the 5'-end of the 23S rRNA. It is important during the early stages of 50S assembly. It makes multiple contacts with different domains of the 23S rRNA in the assembled 50S subunit and ribosome. In terms of biological role, forms part of the polypeptide exit tunnel. This Alteromonas mediterranea (strain DSM 17117 / CIP 110805 / LMG 28347 / Deep ecotype) protein is Large ribosomal subunit protein uL4.